A 210-amino-acid polypeptide reads, in one-letter code: Probable glutathione S-transferase gst-36 (210 aa).

Residues 2–79 (PHFKFYYFDV…YLGHQFHRAG (78 aa)) form the GST N-terminal domain. Residues Tyr-8, Trp-39, Lys-43, 49–51 (GQV), and 63–64 (QT) contribute to the glutathione site. A GST C-terminal domain is found at 81–210 (NAVDCARLDM…YVSQRKATPA (130 aa)).

This sequence belongs to the GST superfamily. Sigma family.

The catalysed reaction is RX + glutathione = an S-substituted glutathione + a halide anion + H(+). Conjugation of reduced glutathione to a wide number of exogenous and endogenous hydrophobic electrophiles. This chain is Probable glutathione S-transferase gst-36 (gst-36), found in Caenorhabditis elegans.